We begin with the raw amino-acid sequence, 154 residues long: MIRVNCMSDRLFELLDGSCLNEKQHEAFVLQTVSEDGWPHAAMISAGEIIALSRTDIRIALWKNTMTSANILRTGKAQFTAWWKGAAYYVKLECAPLPPLKDAEYERDRFSCRIVSVKEDVAKYADLTSGVRIQLHSPEEVLSRWKKTLEDLKR.

This is an uncharacterized protein from Bacillus subtilis (strain 168).